We begin with the raw amino-acid sequence, 227 residues long: 2-C-methyl-D-erythritol 4-phosphate cytidylyltransferase (227 aa).

The protein belongs to the IspD/TarI cytidylyltransferase family. IspD subfamily.

The catalysed reaction is 2-C-methyl-D-erythritol 4-phosphate + CTP + H(+) = 4-CDP-2-C-methyl-D-erythritol + diphosphate. It functions in the pathway isoprenoid biosynthesis; isopentenyl diphosphate biosynthesis via DXP pathway; isopentenyl diphosphate from 1-deoxy-D-xylulose 5-phosphate: step 2/6. Catalyzes the formation of 4-diphosphocytidyl-2-C-methyl-D-erythritol from CTP and 2-C-methyl-D-erythritol 4-phosphate (MEP). In Nostoc punctiforme (strain ATCC 29133 / PCC 73102), this protein is 2-C-methyl-D-erythritol 4-phosphate cytidylyltransferase.